The primary structure comprises 355 residues: NADH dehydrogenase [ubiquinone] 1 alpha subcomplex subunit 10, mitochondrial (355 aa).

The N-terminal 35 residues, 1-35, are a transit peptide targeting the mitochondrion; it reads MALRLLKLAATSASARVVAAGAQRVRGIHSSVQCK. A Phosphoserine; by PINK1 modification is found at S250. Position 285 is an N6-succinyllysine (K285).

Belongs to the complex I NDUFA10 subunit family. As to quaternary structure, complex I is composed of 45 different subunits. This a component of the hydrophobic protein fraction. Requires FAD as cofactor. Phosphorylation at Ser-250 by PINK1 is required for the binding and/or reduction of the complex I substrate ubiquinone.

It localises to the mitochondrion matrix. Accessory subunit of the mitochondrial membrane respiratory chain NADH dehydrogenase (Complex I), that is believed not to be involved in catalysis. Complex I functions in the transfer of electrons from NADH to the respiratory chain. The immediate electron acceptor for the enzyme is believed to be ubiquinone. The chain is NADH dehydrogenase [ubiquinone] 1 alpha subcomplex subunit 10, mitochondrial (NDUFA10) from Homo sapiens (Human).